Reading from the N-terminus, the 107-residue chain is Phosphoribosyl-ATP pyrophosphatase (107 aa).

The protein belongs to the PRA-PH family.

Its subcellular location is the cytoplasm. The catalysed reaction is 1-(5-phospho-beta-D-ribosyl)-ATP + H2O = 1-(5-phospho-beta-D-ribosyl)-5'-AMP + diphosphate + H(+). Its pathway is amino-acid biosynthesis; L-histidine biosynthesis; L-histidine from 5-phospho-alpha-D-ribose 1-diphosphate: step 2/9. The sequence is that of Phosphoribosyl-ATP pyrophosphatase from Bacillus cereus (strain ATCC 14579 / DSM 31 / CCUG 7414 / JCM 2152 / NBRC 15305 / NCIMB 9373 / NCTC 2599 / NRRL B-3711).